A 337-amino-acid polypeptide reads, in one-letter code: Nucleotide sugar transporter SLC35D2 (337 aa).

Over 1–27 the chain is Cytoplasmic; the sequence is MTAGGQAEAEGAGGEPGAARLPSRVAR. The chain crosses the membrane as a helical span at residues 28 to 48; sequence LLSALFYGTCSFLIVLVNKAL. Residues 49-53 lie on the Extracellular side of the membrane; sequence LTTYG. A helical transmembrane segment spans residues 54–74; sequence FPSPIFLGIGQMAATIMILYV. Residues 75-146 lie on the Cytoplasmic side of the membrane; the sequence is SKLNKIIHFP…IILGKQYSLN (72 aa). 2 consecutive transmembrane segments (helical) span residues 147 to 167 and 168 to 188; these read IILS…SDLA and FNLE…ANGV. At 189 to 201 the chain is on the cytoplasmic side; it reads YTKQKMDPKELGK. A helical membrane pass occupies residues 202–222; it reads YGVLFYNACFMIIPTLIISVS. At 223 to 237 the chain is on the extracellular side; the sequence is TGDLQQATEFNQWKN. Residues 238–258 traverse the membrane as a helical segment; the sequence is VVFILQFLLSCFLGFLLMYST. Over 259 to 265 the chain is Cytoplasmic; the sequence is VLCSYYN. A helical membrane pass occupies residues 266 to 288; sequence SALTTAVVGAIKNVSVAYIGILI. The Extracellular segment spans residues 289–292; it reads GGDY. The helical transmembrane segment at 293–315 threads the bilayer; it reads IFSLLNFVGLNICMAGGLRYSFL. Residues 316–337 are Cytoplasmic-facing; that stretch reads TLSSQLKPKPVGEENICLDLKS.

The protein belongs to the TPT transporter family. SLC35D subfamily. Highly expressed in heart, kidney, small intestine, placenta, lung and peripheral blood leukocyte. Weakly expressed in skeletal muscle and spleen. Not expressed in brain, colon and thymus.

Its subcellular location is the golgi apparatus membrane. The enzyme catalyses UMP(out) + UDP-N-acetyl-alpha-D-glucosamine(in) = UMP(in) + UDP-N-acetyl-alpha-D-glucosamine(out). The catalysed reaction is UMP(out) + UDP-alpha-D-glucose(in) = UMP(in) + UDP-alpha-D-glucose(out). Its function is as follows. Nucleotide sugar antiporter transporting UDP-N-acetylglucosamine (UDP-GlcNAc) and UDP-glucose (UDP-Glc) from the cytosol into the lumen of the Golgi in exchange of UMP. By supplying UDP-N-acetylglucosamine, a donor substrate to heparan sulfate synthases, probably takes part in the synthesis of these glycoconjugates. The chain is Nucleotide sugar transporter SLC35D2 from Homo sapiens (Human).